The sequence spans 203 residues: uncharacterized protein (203 aa).

The interval 1 to 23 is disordered; sequence MGSSFVIDRSSSSPAPPRGPAPK.

This is an uncharacterized protein from Saccharomyces cerevisiae (strain ATCC 204508 / S288c) (Baker's yeast).